The chain runs to 75 residues: Peptide Ctri9610 (75 aa).

The first 22 residues, 1 to 22, serve as a signal peptide directing secretion; it reads MNSKYLFVFLILNVIFIDLCQG. Lysine 41 is modified (lysine amide). Residues 42–75 constitute a propeptide that is removed on maturation; that stretch reads GTRRRELGSQYDYLQDFRKRELDLDDLLSKFPDY.

Belongs to the non-disulfide-bridged peptide (NDBP) superfamily. Short antimicrobial peptide (group 4) family. In terms of tissue distribution, expressed by the venom gland.

It localises to the secreted. This chain is Peptide Ctri9610, found in Chaerilus tricostatus (Scorpion).